A 244-amino-acid polypeptide reads, in one-letter code: 1-(5-phosphoribosyl)-5-[(5-phosphoribosylamino)methylideneamino] imidazole-4-carboxamide isomerase (244 aa).

Catalysis depends on D8, which acts as the Proton acceptor. The active-site Proton donor is the D129.

It belongs to the HisA/HisF family.

The protein localises to the cytoplasm. It carries out the reaction 1-(5-phospho-beta-D-ribosyl)-5-[(5-phospho-beta-D-ribosylamino)methylideneamino]imidazole-4-carboxamide = 5-[(5-phospho-1-deoxy-D-ribulos-1-ylimino)methylamino]-1-(5-phospho-beta-D-ribosyl)imidazole-4-carboxamide. Its pathway is amino-acid biosynthesis; L-histidine biosynthesis; L-histidine from 5-phospho-alpha-D-ribose 1-diphosphate: step 4/9. In Maricaulis maris (strain MCS10) (Caulobacter maris), this protein is 1-(5-phosphoribosyl)-5-[(5-phosphoribosylamino)methylideneamino] imidazole-4-carboxamide isomerase.